Here is a 142-residue protein sequence, read N- to C-terminus: Galactose-6-phosphate isomerase subunit LacA (142 aa).

This sequence belongs to the LacAB/RpiB family. In terms of assembly, heteromultimeric protein consisting of LacA and LacB.

The enzyme catalyses aldehydo-D-galactose 6-phosphate = keto-D-tagatose 6-phosphate. It participates in carbohydrate metabolism; D-galactose 6-phosphate degradation; D-tagatose 6-phosphate from D-galactose 6-phosphate: step 1/1. The chain is Galactose-6-phosphate isomerase subunit LacA from Enterococcus faecalis (strain ATCC 700802 / V583).